Here is a 178-residue protein sequence, read N- to C-terminus: UPF0114 protein HPSH_00970 (178 aa).

The next 4 membrane-spanning stretches (helical) occupy residues 15 to 35 (WLLA…GYVF), 54 to 74 (LVLS…VLMV), 102 to 122 (FNAL…IFLL), and 145 to 165 (PIFW…LAAV).

The protein belongs to the UPF0114 family.

The protein resides in the cell membrane. The chain is UPF0114 protein HPSH_00970 from Helicobacter pylori (strain Shi470).